A 76-amino-acid polypeptide reads, in one-letter code: Putative snRNP Sm-like protein (76 aa).

A Sm domain is found at 4-76 (RPLDVIHKSL…VLAISPVEIE (73 aa)).

This sequence belongs to the snRNP Sm proteins family.

The chain is Putative snRNP Sm-like protein from Thermococcus sibiricus (strain DSM 12597 / MM 739).